An 878-amino-acid chain; its full sequence is Ecdysone receptor (878 aa).

Disordered regions lie at residues 1-27 (MKRR…SSSN) and 209-254 (GLGM…SKKG). The tract at residues 1–263 (MKRRWSNNGG…GPAPRVQEEL (263 aa)) is modulating. 2 consecutive NR C4-type zinc fingers follow at residues 264 to 284 (CLVC…CEGC) and 300 to 324 (CKFG…LKKC). The segment at residues 264–336 (CLVCGDRASG…VGMRPECVVP (73 aa)) is a DNA-binding region (nuclear receptor). A disordered region spans residues 344–374 (RREKKAQKEKDKMTTSPSSQHGGNGSLASGG). The segment covering 365-374 (GGNGSLASGG) has biased composition (gly residues). Residues 419–654 (NQLAVIYKLI…FLEEIWDVHA (236 aa)) enclose the NR LBD domain. 2 stretches are compositionally biased toward low complexity: residues 698-709 (TSAAAAAAQHQP) and 728-759 (QTQP…QLQP). Positions 698–759 (TSAAAAAAQH…QPQLQTQLQP (62 aa)) are disordered.

The protein belongs to the nuclear hormone receptor family. NR1 subfamily. Heterodimer of USP and ECR. Only the heterodimer is capable of high-affinity binding to ecdysone. Interacts with trr in an ecdysone-dependent manner. Upon ecdysone stimulation, interacts with Nup98. Isoform B1 predominates over isoform A in larval tissues, imaginal histoblast nests and midgut islands. Isoform A predominates over B1 in imaginal disks, and the larval prothoracic gland.

It localises to the nucleus. Receptor for ecdysone. Binds to ecdysone response elements (ECRES) following ecdysone-binding, and recruitment of a complex containing the histone methyltransferase trr, leads to activate transcription of target genes. This chain is Ecdysone receptor (EcR), found in Drosophila melanogaster (Fruit fly).